The sequence spans 384 residues: N-acetyldiaminopimelate deacetylase (384 aa).

D74 is a catalytic residue. E133 serves as the catalytic Proton acceptor.

It belongs to the peptidase M20A family. N-acetyldiaminopimelate deacetylase subfamily.

The enzyme catalyses N-acetyl-(2S,6S)-2,6-diaminopimelate + H2O = (2S,6S)-2,6-diaminopimelate + acetate. It participates in amino-acid biosynthesis; L-lysine biosynthesis via DAP pathway; LL-2,6-diaminopimelate from (S)-tetrahydrodipicolinate (acetylase route): step 3/3. In terms of biological role, catalyzes the conversion of N-acetyl-diaminopimelate to diaminopimelate and acetate. The chain is N-acetyldiaminopimelate deacetylase from Pediococcus pentosaceus (strain ATCC 25745 / CCUG 21536 / LMG 10740 / 183-1w).